Consider the following 491-residue polypeptide: Anthranilate synthase component 1 (491 aa).

L-tryptophan-binding positions include serine 49 and 271-273 (PYL). 306–307 (GT) contacts chorismate. Mg(2+) is bound at residue glutamate 333. Chorismate contacts are provided by residues tyrosine 421, arginine 441, 455 to 457 (GAG), and glycine 457. Position 470 (glutamate 470) interacts with Mg(2+).

It belongs to the anthranilate synthase component I family. Heterotetramer consisting of two non-identical subunits: a beta subunit (TrpG) and a large alpha subunit (TrpE). Requires Mg(2+) as cofactor.

The enzyme catalyses chorismate + L-glutamine = anthranilate + pyruvate + L-glutamate + H(+). It functions in the pathway amino-acid biosynthesis; L-tryptophan biosynthesis; L-tryptophan from chorismate: step 1/5. Its activity is regulated as follows. Feedback inhibited by tryptophan. Functionally, part of a heterotetrameric complex that catalyzes the two-step biosynthesis of anthranilate, an intermediate in the biosynthesis of L-tryptophan. In the first step, the glutamine-binding beta subunit (TrpG) of anthranilate synthase (AS) provides the glutamine amidotransferase activity which generates ammonia as a substrate that, along with chorismate, is used in the second step, catalyzed by the large alpha subunit of AS (TrpE) to produce anthranilate. In the absence of TrpG, TrpE can synthesize anthranilate directly from chorismate and high concentrations of ammonia. The chain is Anthranilate synthase component 1 (trpE) from Neisseria meningitidis serogroup A / serotype 4A (strain DSM 15465 / Z2491).